A 103-amino-acid polypeptide reads, in one-letter code: Large ribosomal subunit protein bL21 (103 aa).

It belongs to the bacterial ribosomal protein bL21 family. In terms of assembly, part of the 50S ribosomal subunit. Contacts protein L20.

Functionally, this protein binds to 23S rRNA in the presence of protein L20. In Clostridioides difficile (strain 630) (Peptoclostridium difficile), this protein is Large ribosomal subunit protein bL21.